The primary structure comprises 452 residues: MKETIVAQATAPGRGGIGILRVSGPLATKVAQAILGKCPKPRMADYLPFKDADGTILDQGIALYFKSPNSFTGEDVLELQGHGGQVVLDLLLKRILQIDGIRLARPGEFSEQAFLNDKLDLAQAEAIADLIDATSEQAVRSALKSLQGEFSKKVNELVDSVIYLRTYVEASIDFPDEEIDFLADGKIEANLRGIINQLEDVRSEAKQGSILREGMKVVIAGRPNAGKSSLLNALAGREAAIVTDIAGTTRDVLREHIHIDGMPLHIIDTAGLRDAIDEVERIGISRAWTEIEQADRIILMLDSSDPESADLSKVRSEFLAKLPSTLPVTIVRNKIDLNGEQASESEQGGYQMISLSAQTHDGVQLLREHLKQAMGFQTGMEGGFLARRRHLDALDKAAEHLQIGLVQLTEFHAGELLAEELRLVQSYLSEITGQFTSDDLLGNIFSSFCIGK.

(6S)-5-formyl-5,6,7,8-tetrahydrofolate is bound by residues Arg-21, Glu-78, and Lys-118. The TrmE-type G domain occupies 214-375; sequence GMKVVIAGRP…LREHLKQAMG (162 aa). Asn-224 is a binding site for K(+). GTP is bound by residues 224–229, 243–249, and 268–271; these read NAGKSS, TDIAGTT, and DTAG. Residue Ser-228 coordinates Mg(2+). K(+) contacts are provided by Thr-243, Ile-245, and Thr-248. Residue Thr-249 participates in Mg(2+) binding. Lys-452 is a binding site for (6S)-5-formyl-5,6,7,8-tetrahydrofolate.

The protein belongs to the TRAFAC class TrmE-Era-EngA-EngB-Septin-like GTPase superfamily. TrmE GTPase family. In terms of assembly, homodimer. Heterotetramer of two MnmE and two MnmG subunits. K(+) serves as cofactor.

The protein localises to the cytoplasm. Exhibits a very high intrinsic GTPase hydrolysis rate. Involved in the addition of a carboxymethylaminomethyl (cmnm) group at the wobble position (U34) of certain tRNAs, forming tRNA-cmnm(5)s(2)U34. This chain is tRNA modification GTPase MnmE, found in Haemophilus influenzae (strain ATCC 51907 / DSM 11121 / KW20 / Rd).